We begin with the raw amino-acid sequence, 474 residues long: MTQKLHIKTWGCQMNEYDSSKMADLLQSTHGLELTEEAEQADVLLLNTCSIREKAQEKVFHQLGRWKELKKKNPNLVIGVGGCVASQEGEHIRERAPYVDIIFGPQTLHRLPEMINQIRAGEKAVLDISFPEIEKFDRLPEPKAEGPTAFVSIMEGCNKYCTYCVVPYTRGEEVSRPLDDVLFEIAQLAEQGVREVNLLGQNVNAYRGPTHDGGICSFAELLRLVAAIDGIDRLRFTTSNPIEFTDDIIDVYRDTPELVSFLHLPVQAGSDRILTMMKRGHTAIEYKSIIRKLRAVRPNIQISSDFIVGFPGETNEEFEQTMNLIQQVNFDMSFSFVYSARPGTPAADMPDDVTEEEKKQRLYILQQRINNQAAQFSRAMLGTEQRVLVEGPSKKDIMELTGRTENNRIVNFAGTPDMIGKFVDIKITDVFTNSLRGDVVRTEDQMGLRVVQSPQAVINRTRKEDELGVGRFGG.

An MTTase N-terminal domain is found at 3–120; it reads QKLHIKTWGC…LPEMINQIRA (118 aa). Cys12, Cys49, Cys83, Cys157, Cys161, and Cys164 together coordinate [4Fe-4S] cluster. The Radical SAM core domain occupies 143–375; the sequence is KAEGPTAFVS…QQRINNQAAQ (233 aa). Positions 378 to 441 constitute a TRAM domain; that stretch reads RAMLGTEQRV…TNSLRGDVVR (64 aa).

Belongs to the methylthiotransferase family. MiaB subfamily. Monomer. The cofactor is [4Fe-4S] cluster.

The protein localises to the cytoplasm. It carries out the reaction N(6)-dimethylallyladenosine(37) in tRNA + (sulfur carrier)-SH + AH2 + 2 S-adenosyl-L-methionine = 2-methylsulfanyl-N(6)-dimethylallyladenosine(37) in tRNA + (sulfur carrier)-H + 5'-deoxyadenosine + L-methionine + A + S-adenosyl-L-homocysteine + 2 H(+). Functionally, catalyzes the methylthiolation of N6-(dimethylallyl)adenosine (i(6)A), leading to the formation of 2-methylthio-N6-(dimethylallyl)adenosine (ms(2)i(6)A) at position 37 in tRNAs that read codons beginning with uridine. This Mannheimia succiniciproducens (strain KCTC 0769BP / MBEL55E) protein is tRNA-2-methylthio-N(6)-dimethylallyladenosine synthase.